The primary structure comprises 244 residues: Small ribosomal subunit protein uS3 (244 aa).

In terms of domain architecture, KH type-2 spans 39–107 (VREMLRKKLA…PAHINVTEVR (69 aa)). The segment at 213–244 (VGQEKQDDSPRNDRNDRGDRGDRPSRPAREAR) is disordered. A compositionally biased stretch (basic and acidic residues) spans 216–244 (EKQDDSPRNDRNDRGDRGDRPSRPAREAR).

This sequence belongs to the universal ribosomal protein uS3 family. Part of the 30S ribosomal subunit. Forms a tight complex with proteins S10 and S14.

In terms of biological role, binds the lower part of the 30S subunit head. Binds mRNA in the 70S ribosome, positioning it for translation. This chain is Small ribosomal subunit protein uS3, found in Xanthomonas oryzae pv. oryzae (strain MAFF 311018).